Consider the following 975-residue polypeptide: Monofunctional C1-tetrahydrofolate synthase, mitochondrial (975 aa).

The N-terminal 30 residues, 1–30, are a transit peptide targeting the mitochondrion; sequence MSARLPFVLRRLARPQHPGSPRRLPSLCRA. Residues 13 to 45 form a disordered region; that stretch reads ARPQHPGSPRRLPSLCRASSGRGSGCGGGEGLL. The segment at 31–345 is methylenetetrahydrofolate dehydrogenase and cyclohydrolase; that stretch reads SSGRGSGCGG…REQQHRRWRL (315 aa). Residues 34 to 44 show a composition bias toward gly residues; sequence RGSGCGGGEGL. The residue at position 187 (Lys-187) is an N6-acetyllysine; alternate. N6-succinyllysine; alternate is present on Lys-187. The interval 346-975 is formyltetrahydrofolate synthetase; sequence HCLKLQPLSP…TETEQVKGLF (630 aa). Ser-354 is modified (phosphoserine). 420–427 contributes to the ATP binding site; it reads TPLGEGKS. The residue at position 593 (Lys-593) is an N6-succinyllysine.

This sequence in the N-terminal section; belongs to the tetrahydrofolate dehydrogenase/cyclohydrolase family. The protein in the C-terminal section; belongs to the formate--tetrahydrofolate ligase family. In terms of assembly, homodimer.

It localises to the mitochondrion. It catalyses the reaction (6S)-5,6,7,8-tetrahydrofolate + formate + ATP = (6R)-10-formyltetrahydrofolate + ADP + phosphate. It participates in one-carbon metabolism; tetrahydrofolate interconversion. In terms of biological role, may provide the missing metabolic reaction required to link the mitochondria and the cytoplasm in the mammalian model of one-carbon folate metabolism complementing thus the enzymatic activities of MTHFD2. The polypeptide is Monofunctional C1-tetrahydrofolate synthase, mitochondrial (MTHFD1L) (Bos taurus (Bovine)).